Consider the following 218-residue polypeptide: Glutathione S-transferase Y1 (218 aa).

Residues 2–88 (PMILGYWNVR…YIARKHNLCG (87 aa)) form the GST N-terminal domain. Glutathione is bound by residues 7–8 (YW), 46–50 (WLNEK), 59–60 (NL), and 72–73 (QS). Residues 90-208 (TEEERIRVDI…KTSRFLRRPI (119 aa)) enclose the GST C-terminal domain. Tyr-116 contacts substrate.

Belongs to the GST superfamily. Mu family. Homodimer.

It is found in the cytoplasm. It carries out the reaction RX + glutathione = an S-substituted glutathione + a halide anion + H(+). Functionally, conjugation of reduced glutathione to a wide number of exogenous and endogenous hydrophobic electrophiles. The sequence is that of Glutathione S-transferase Y1 from Cricetulus longicaudatus (Long-tailed dwarf hamster).